Reading from the N-terminus, the 131-residue chain is Flagellar assembly factor FliW (131 aa).

It belongs to the FliW family. In terms of assembly, interacts with translational regulator CsrA and flagellin(s).

The protein resides in the cytoplasm. Functionally, acts as an anti-CsrA protein, binds CsrA and prevents it from repressing translation of its target genes, one of which is flagellin. Binds to flagellin and participates in the assembly of the flagellum. The protein is Flagellar assembly factor FliW of Campylobacter lari (strain RM2100 / D67 / ATCC BAA-1060).